A 106-amino-acid polypeptide reads, in one-letter code: Immunity protein CdiI (106 aa).

As to quaternary structure, forms a contact-dependent growth inhibition complex of CdiA-CT-NC101, CdiI-NC101 and EF-Tu; the complex is a dimer of heterotrimers.

Immunity protein component of a toxin-immunity protein module, which functions as a cellular contact-dependent growth inhibition (CDI) system. CDI modules allow bacteria to communicate with and inhibit the growth of closely related neighboring bacteria in a contact-dependent fashion. Neutralizes the toxic activity of cognate toxin CdiA-NC101 (the C-terminal 154 residue CT fragment). Does not inhibit toxic activity of CdiA from other toxin-immunity modules or strains of E.coli. Mediates dimerization of the ternary CdiA-CT-NC101, CdiI-NC101 and EF-Tu complex; both CdiI molecules contact both EF-Tu molecules. The polypeptide is Immunity protein CdiI (Escherichia coli (strain NC101)).